Here is a 51-residue protein sequence, read N- to C-terminus: Large ribosomal subunit protein eL39 (51 aa).

It belongs to the eukaryotic ribosomal protein eL39 family.

The chain is Large ribosomal subunit protein eL39 (RpL39) from Plutella xylostella (Diamondback moth).